A 147-amino-acid chain; its full sequence is Hemoglobin subunit epsilon (147 aa).

Residues 3–147 (HFTAEEKAAV…VAIALAHKYH (145 aa)) form the Globin domain. 2 positions are modified to phosphoserine: serine 14 and serine 51. Heme b-binding residues include histidine 64 and histidine 93.

It belongs to the globin family. As to quaternary structure, heterotetramer of two alpha chains and two epsilon chains in early embryonic hemoglobin Gower-2; two zeta chains and two epsilon chains in early embryonic hemoglobin Gower-1. Red blood cells.

Functionally, the epsilon chain is a beta-type chain of early mammalian embryonic hemoglobin. This chain is Hemoglobin subunit epsilon (HBE1), found in Pan troglodytes (Chimpanzee).